Here is a 354-residue protein sequence, read N- to C-terminus: Probable alcohol acetyltransferase (354 aa).

Active-site charge relay system residues include Ser124 and His293.

The protein belongs to the AB hydrolase superfamily.

In terms of biological role, probable alcohol acetyltransferase that uses acetyl-CoA to synthesize acetate esters from various alcohols. Not involved in the synthesis of ethyl acetate. In Cyberlindnera jadinii (strain ATCC 18201 / CBS 1600 / BCRC 20928 / JCM 3617 / NBRC 0987 / NRRL Y-1542) (Torula yeast), this protein is Probable alcohol acetyltransferase (EAT2).